The sequence spans 919 residues: Alpha-amylase (919 aa).

Positions 1 to 33 (MPATRRTARVRRVAAVTVTALAAALLPPLAARA) are cleaved as a signal peptide. Ca(2+) contacts are provided by N182 and D281. Catalysis depends on D312, which acts as the Nucleophile. H316 is a Ca(2+) binding site. E346 acts as the Proton donor in catalysis. The disordered stretch occupies residues 704–729 (ASGRLHHRHPARRGGAHRRLPGPRGR). Residues 707–724 (RLHHRHPARRGGAHRRLP) are compositionally biased toward basic residues.

The protein belongs to the glycosyl hydrolase 13 family. Monomer. It depends on Ca(2+) as a cofactor.

It localises to the secreted. The enzyme catalyses Endohydrolysis of (1-&gt;4)-alpha-D-glucosidic linkages in polysaccharides containing three or more (1-&gt;4)-alpha-linked D-glucose units.. The chain is Alpha-amylase (amy) from Streptomyces lividans.